The sequence spans 101 residues: Acylphosphatase-1 (101 aa).

S2 is subject to N-acetylserine. S2 is modified (N-acetylalanine). In terms of domain architecture, Acylphosphatase-like spans 11-101 (SVDYEVFGKV…LDYSDFQIVK (91 aa)). Catalysis depends on residues R26 and N44.

This sequence belongs to the acylphosphatase family. As to expression, organ-common type isozyme is found in many different tissues.

The catalysed reaction is an acyl phosphate + H2O = a carboxylate + phosphate + H(+). This chain is Acylphosphatase-1 (ACYP1), found in Sus scrofa (Pig).